We begin with the raw amino-acid sequence, 68 residues long: Dermaseptin-H5 (68 aa).

Positions 1-17 (KSLFLVLFLGMVSLSIC) are cleaved as a signal peptide. Positions 18–38 (EEEKRENEDEEKQEDDEQSEM) are excised as a propeptide. Positions 19–40 (EEKRENEDEEKQEDDEQSEMKR) are disordered. A compositionally biased stretch (acidic residues) spans 25–35 (EDEEKQEDDEQ). Leu-65 carries the post-translational modification Leucine amide. A propeptide spanning residues 67 to 68 (EQ) is cleaved from the precursor.

Expressed by the skin glands.

Its subcellular location is the secreted. In terms of biological role, has antibacterial activity against the Gram-negative bacteria E.coli ATCC 11775 (MIC=0.5 uM), and the Gram-positive bacteria S.aureus ATCC 12600 (MIC=0.5 uM) and M.luteus ATCC 49732 (MIC=2.0 uM). Does not inhibit the growth of the fungus C.albicans. Probably acts by disturbing membrane functions with its amphipathic structure. This chain is Dermaseptin-H5, found in Pithecopus azureus (Orange-legged monkey tree frog).